Reading from the N-terminus, the 205-residue chain is NADH-quinone oxidoreductase subunit I (205 aa).

4Fe-4S ferredoxin-type domains are found at residues 75-104 (RLLESGNERCIGCGLCEKICISNCIRMETS) and 114-143 (HEYTINFGRCIFCGFCAEVCPELAIVHGGR). The [4Fe-4S] cluster site is built by Cys-84, Cys-87, Cys-90, Cys-94, Cys-123, Cys-126, Cys-129, and Cys-133.

It belongs to the complex I 23 kDa subunit family. In terms of assembly, NDH-1 is composed of 14 different subunits. Subunits NuoA, H, J, K, L, M, N constitute the membrane sector of the complex. It depends on [4Fe-4S] cluster as a cofactor.

The protein resides in the cell inner membrane. It carries out the reaction a quinone + NADH + 5 H(+)(in) = a quinol + NAD(+) + 4 H(+)(out). Its function is as follows. NDH-1 shuttles electrons from NADH, via FMN and iron-sulfur (Fe-S) centers, to quinones in the respiratory chain. The immediate electron acceptor for the enzyme in this species is believed to be ubiquinone. Couples the redox reaction to proton translocation (for every two electrons transferred, four hydrogen ions are translocated across the cytoplasmic membrane), and thus conserves the redox energy in a proton gradient. This Wolinella succinogenes (strain ATCC 29543 / DSM 1740 / CCUG 13145 / JCM 31913 / LMG 7466 / NCTC 11488 / FDC 602W) (Vibrio succinogenes) protein is NADH-quinone oxidoreductase subunit I.